We begin with the raw amino-acid sequence, 238 residues long: 3-dehydroquinate dehydratase (238 aa).

3-dehydroquinate contacts are provided by residues 35–37 and Arg70; that span reads ELR. His133 acts as the Proton donor/acceptor in catalysis. Catalysis depends on Lys160, which acts as the Schiff-base intermediate with substrate. 3-dehydroquinate-binding residues include Arg202 and Gln225.

This sequence belongs to the type-I 3-dehydroquinase family. As to quaternary structure, homodimer.

The catalysed reaction is 3-dehydroquinate = 3-dehydroshikimate + H2O. The protein operates within metabolic intermediate biosynthesis; chorismate biosynthesis; chorismate from D-erythrose 4-phosphate and phosphoenolpyruvate: step 3/7. Functionally, involved in the third step of the chorismate pathway, which leads to the biosynthesis of aromatic amino acids. Catalyzes the cis-dehydration of 3-dehydroquinate (DHQ) and introduces the first double bond of the aromatic ring to yield 3-dehydroshikimate. The chain is 3-dehydroquinate dehydratase from Staphylococcus aureus (strain Mu3 / ATCC 700698).